A 441-amino-acid chain; its full sequence is uncharacterized protein (441 aa).

The next 11 helical transmembrane spans lie at 68–88 (MAIAGAFAVLFLPYSLLGPFA), 110–130 (ALIAGVGTILAVGAGDVPLLV), 131–151 (GALVANGLARFVASGLSAALP), 164–184 (SVAIASGAVSAFLGANFMLLP), 194–214 (GASAIVFLVAIPVSIALLWSL), 229–246 (AIHGSAVYAVVTGWLHGA), 260–280 (SGLAAHRMVVGINSLLILLLV), 287–307 (AVGGLGTALLFFAATGLGAFL), 337–357 (VAAAGLLVPVMVVCGFLLGVA), 384–404 (VQDALFWVSYILSITVAAALI), and 412–432 (VFVLFGSAIYLAGLVVHTIVG).

Belongs to the major facilitator superfamily.

The protein resides in the cell membrane. This is an uncharacterized protein from Mycobacterium tuberculosis (strain ATCC 25618 / H37Rv).